We begin with the raw amino-acid sequence, 199 residues long: NAD(P)H dehydrogenase (quinone) (199 aa).

In terms of domain architecture, Flavodoxin-like spans 4–190 (VLVLYYSAYG…AGARYQGRRV (187 aa)). FMN is bound by residues 10–15 (SAYGHI) and 78–80 (TRF). Tyr-12 is a binding site for NAD(+). Residue Trp-98 coordinates substrate. FMN-binding positions include 113-119 (STATQHG) and His-134.

It belongs to the WrbA family. FMN serves as cofactor.

It carries out the reaction a quinone + NADH + H(+) = a quinol + NAD(+). The catalysed reaction is a quinone + NADPH + H(+) = a quinol + NADP(+). This Methylocella silvestris (strain DSM 15510 / CIP 108128 / LMG 27833 / NCIMB 13906 / BL2) protein is NAD(P)H dehydrogenase (quinone).